The primary structure comprises 154 residues: Transcription antitermination protein NusB (154 aa).

Positions 132–154 (KDKQSPQSTPLDDSDKDESDQTN) are disordered. The segment covering 143–154 (DDSDKDESDQTN) has biased composition (acidic residues).

It belongs to the NusB family.

Functionally, involved in transcription antitermination. Required for transcription of ribosomal RNA (rRNA) genes. Binds specifically to the boxA antiterminator sequence of the ribosomal RNA (rrn) operons. The sequence is that of Transcription antitermination protein NusB from Bifidobacterium animalis subsp. lactis (strain AD011).